The sequence spans 198 residues: Na(+)-translocating NADH-quinone reductase subunit E (198 aa).

6 consecutive transmembrane segments (helical) span residues 11–31, 35–55, 77–97, 109–129, 140–160, and 176–196; these read AVFV…FLAV, VSTA…SVPA, FLNF…LEMI, LGIF…VSFM, IVYG…LAGI, and LGIT…FAGV.

The protein belongs to the NqrDE/RnfAE family. Composed of six subunits; NqrA, NqrB, NqrC, NqrD, NqrE and NqrF.

The protein localises to the cell inner membrane. The enzyme catalyses a ubiquinone + n Na(+)(in) + NADH + H(+) = a ubiquinol + n Na(+)(out) + NAD(+). Its function is as follows. NQR complex catalyzes the reduction of ubiquinone-1 to ubiquinol by two successive reactions, coupled with the transport of Na(+) ions from the cytoplasm to the periplasm. NqrA to NqrE are probably involved in the second step, the conversion of ubisemiquinone to ubiquinol. This is Na(+)-translocating NADH-quinone reductase subunit E from Yersinia pestis bv. Antiqua (strain Nepal516).